Reading from the N-terminus, the 566-residue chain is MSDFKQKVSELLGTQIEGIGQRELLEMIEVPPNSEMGDFAFPCFRLAKTFRKAPQVIAEELVAKIQLTDDFEKVDNTGGYLNFFVNRNTYAKAVIQEVLSKGDQYGSRNLGEGKNICIDYSAPNVAKPFHVGHLRSTVIGNSLYRIYDFLGYNCIGINHLGDWGTQFGKVIVAYKNWGDKAEIEKEPINTLLALYVKFHDEAEKNPDLEDEARGWFTKMEKGDEEALSLWKWFSSETIKELKKIYALLDVHFDHYSGESFYNDKMDVVIDELNKQNLLKESQGANIVDLEEYNMPPCLVQKKDGSTLYATRDIAAAIYRKNTFNFEKCLYVTDYSQNLHFAQWFKVIELMGYDWAKDIEHISFGRVTHEGRRIQSRKGSVVLLEEVLNGAVERISEIIEEKNPNVENKEQVAKDVGIGAIVFNDLSNNRIKDISFSWDTAFSFEGETGPYVQYTHARASSVLRKAEVAITDHINAAHLTDDVTMNVIKTIEQFPQVIVDAQRKNEPSIITRHIVNIAQAFNRFYHDHPILVEDEELKMARLAVVQAVKQVLSVGLSLIGIKAPEKM.

The short motif at proline 123–histidine 133 is the 'HIGH' region element.

This sequence belongs to the class-I aminoacyl-tRNA synthetase family. As to quaternary structure, monomer.

Its subcellular location is the cytoplasm. It carries out the reaction tRNA(Arg) + L-arginine + ATP = L-arginyl-tRNA(Arg) + AMP + diphosphate. This Alkaliphilus metalliredigens (strain QYMF) protein is Arginine--tRNA ligase.